The sequence spans 254 residues: RxLR effector protein CRE5 (254 aa).

An N-terminal signal peptide occupies residues 1-19; it reads MQTIQLIIFVAFVLSRAAA. An N-linked (GlcNAc...) asparagine glycan is attached at N49. The short motif at 53 to 63 is the RxLR-dEER element; sequence RSLRQHEGEDR. Positions 191–254 constitute a Nudix hydrolase domain; the sequence is SRWLSAGVVT…MEEGGVCRAL (64 aa). Positions 228-249 match the Nudix box motif; that stretch reads GGWDRGEKIKKAALREVMEEGG.

The protein in the N-terminal section; belongs to the RxLR effector family. In the C-terminal section; belongs to the Nudix hydrolase family.

It localises to the secreted. The protein resides in the host cytoplasm. The protein localises to the host nucleus. Its subcellular location is the host nucleolus. Its function is as follows. Effector that is involved in host plant infection. Contributes to virulence during the early infection stage, by inhibiting plant defense responses induced by both PAMP-triggered immunity (PTI) and effector-triggered immunity (ETI). The protein is RxLR effector protein CRE5 of Phytophthora infestans (strain T30-4) (Potato late blight agent).